Reading from the N-terminus, the 687-residue chain is Translation initiation factor IF-2 (687 aa).

A tr-type G domain is found at 186 to 355 (KRPPIVTVMG…LLTAEMLELK (170 aa)). The tract at residues 195–202 (GHVDHGKT) is G1. 195 to 202 (GHVDHGKT) contacts GTP. The interval 220–224 (GITQH) is G2. Residues 241–244 (DTPG) form a G3 region. GTP-binding positions include 241 to 245 (DTPGH) and 295 to 298 (NKID). The G4 stretch occupies residues 295 to 298 (NKID). The interval 331–333 (SAK) is G5.

The protein belongs to the TRAFAC class translation factor GTPase superfamily. Classic translation factor GTPase family. IF-2 subfamily.

It localises to the cytoplasm. One of the essential components for the initiation of protein synthesis. Protects formylmethionyl-tRNA from spontaneous hydrolysis and promotes its binding to the 30S ribosomal subunits. Also involved in the hydrolysis of GTP during the formation of the 70S ribosomal complex. This Clostridium botulinum (strain Alaska E43 / Type E3) protein is Translation initiation factor IF-2.